The chain runs to 909 residues: Yellow mounds protein A (909 aa).

Residues 7–283 enclose the MIF4G domain; that stretch reads LNVVSRILNK…KNLFELKNNK (277 aa). 5 disordered regions span residues 178 to 232, 415 to 439, 460 to 537, 627 to 689, and 704 to 774; these read SMGG…NNNI, MESS…SGIK, INLP…SSAP, VPPV…SEAR, and SLSG…AKKH. The segment covering 204 to 215 has biased composition (acidic residues); that stretch reads DDDDHDEEDNEN. Composition is skewed to low complexity over residues 216–231 and 417–436; these read NYEN…NNNN and SSSN…SSSS. Residues 473 to 490 show a composition bias toward polar residues; it reads RSNSPSLSSVVKQPQSQQ. Residues 491–525 show a composition bias toward low complexity; the sequence is NNNNNNNNNNNNTTITTTTSSNNNINNNNNNNNNN. Residues 721 to 738 show a composition bias toward polar residues; the sequence is STPTLKSTPAIVQNGGSI. The span at 739 to 756 shows a compositional bias: low complexity; the sequence is TSTSSSSSSSSSSSSSTT. A coiled-coil region spans residues 845–877; that stretch reads TMLFDLEEMAQEQQNLEKQNDQQQNLLTQNNQI.

In terms of biological role, plays as essential role in regulating terminal differentiation. The protein is Yellow mounds protein A (yelA) of Dictyostelium discoideum (Social amoeba).